Consider the following 80-residue polypeptide: Acyl carrier protein (80 aa).

Residues 1–76 (MTLEEKIIEI…DVIDYLKVRN (76 aa)) enclose the Carrier domain. An O-(pantetheine 4'-phosphoryl)serine modification is found at Ser-36.

This sequence belongs to the acyl carrier protein (ACP) family. Post-translationally, 4'-phosphopantetheine is transferred from CoA to a specific serine of apo-ACP by AcpS. This modification is essential for activity because fatty acids are bound in thioester linkage to the sulfhydryl of the prosthetic group.

The protein localises to the cytoplasm. It participates in lipid metabolism; fatty acid biosynthesis. In terms of biological role, carrier of the growing fatty acid chain in fatty acid biosynthesis. The chain is Acyl carrier protein from Syntrophus aciditrophicus (strain SB).